We begin with the raw amino-acid sequence, 384 residues long: uncharacterized protein (384 aa).

The next 12 membrane-spanning stretches (helical) occupy residues 22-42 (LAFFIAGLGMAAWAPLVPFAK), 52-72 (LGLLLLCIGIGSMLAMPLTGV), 81-101 (AVILLAGAVLCLDLPLLVLMN), 106-126 (MAIALLVFGAAMGIIDVAMNI), 143-163 (FHGLFSVGGIVGAGGVSALLW), 164-184 (LGLNPLTAIMATVVLMIILLL), 202-222 (LFVFPRGWVMFIGFLCFVMFL), 240-260 (GMSPSQAGMGYAVFAIAMTLG), 276-296 (VLLGGSLCSAIGIIIAISIDS), 299-319 (AAIIGFMLVGFGASNVVPILF), 327-347 (VMPANLAVASITTIGYAGILA), and 352-372 (IGFIAQLSSLSVAFGCVALLL).

It belongs to the major facilitator superfamily.

It is found in the membrane. This is an uncharacterized protein from Yersinia pestis.